Here is a 484-residue protein sequence, read N- to C-terminus: Probable sphingolipid transporter spinster homolog 2 (484 aa).

The segment at 1-23 (MDVDGEGDRGQNPRIMERDSDSI) is disordered. A helical transmembrane segment spans residues 38–58 (LLFVFCVVNLINYIDRGAIAS). N62 and N85 each carry an N-linked (GlcNAc...) asparagine glycan. A run of 11 helical transmembrane segments spans residues 93–113 (VLSS…ASLA), 122–142 (IGVG…SFDF), 147–167 (ICRM…APFI), 181–201 (AVFY…GGVV), 209–229 (AAFW…FVIK), 273–293 (VYVT…AYSY), 311–331 (IFGG…GVIL), 345–362 (LSVS…AFCF), 377–397 (LLVF…VKPS), 405–425 (MSTV…VGVL), and 436–456 (SLVL…GIFL). S466 is modified (phosphoserine).

Belongs to the major facilitator superfamily. Spinster (TC 2.A.1.49) family.

It is found in the late endosome membrane. Its subcellular location is the lysosome membrane. Functionally, probable sphingolipid transporter that plays a central role in endosomes and/or lysosomes storage. The sequence is that of Probable sphingolipid transporter spinster homolog 2 from Arabidopsis thaliana (Mouse-ear cress).